The following is a 207-amino-acid chain: Minor capsid protein P11 (207 aa).

The segment at 7-23 (VKVVAILAVLFLVYKLW) is hydrophobic. The tract at residues 63–82 (ETDAEDDDIYTGETDDMYDG) is disordered.

Interacts with the major capsid protein.

The protein localises to the virion. One of the minor capsid proteins that constitute a network internal to the major capsid proteins and outside the lipid membrane. The minor capsid proteins glue and stabilize the capsomers. the p11 zip protein binds together the neighboring symmetrons. The polypeptide is Minor capsid protein P11 (Paramecium bursaria Chlorella virus 1 (PBCV-1)).